We begin with the raw amino-acid sequence, 249 residues long: 5'-nucleotidase SurE (249 aa).

A divalent metal cation is bound by residues Asp-8, Asp-9, Ser-39, and Asn-91.

This sequence belongs to the SurE nucleotidase family. A divalent metal cation is required as a cofactor.

Its subcellular location is the cytoplasm. It catalyses the reaction a ribonucleoside 5'-phosphate + H2O = a ribonucleoside + phosphate. Its function is as follows. Nucleotidase that shows phosphatase activity on nucleoside 5'-monophosphates. This is 5'-nucleotidase SurE from Pseudomonas paraeruginosa (strain DSM 24068 / PA7) (Pseudomonas aeruginosa (strain PA7)).